Here is a 196-residue protein sequence, read N- to C-terminus: UPF0301 protein BF2109 (196 aa).

It belongs to the UPF0301 (AlgH) family.

In Bacteroides fragilis (strain ATCC 25285 / DSM 2151 / CCUG 4856 / JCM 11019 / LMG 10263 / NCTC 9343 / Onslow / VPI 2553 / EN-2), this protein is UPF0301 protein BF2109.